A 232-amino-acid polypeptide reads, in one-letter code: UPF0502 protein mma_2112 (232 aa).

Belongs to the UPF0502 family.

This is UPF0502 protein mma_2112 from Janthinobacterium sp. (strain Marseille) (Minibacterium massiliensis).